The chain runs to 122 residues: UPF0382 membrane protein SAUSA300_0565 (122 aa).

A run of 4 helical transmembrane segments spans residues 3 to 23 (LFIILGALNAMMAVGTGAFGA), 46 to 66 (MYHGLALLIIGVISGTTSINV), 69 to 89 (AGWLIFAGIIFFSGSLYILVL), and 98 to 118 (ITPIGGVLFIIGWIMLIIATF).

It belongs to the UPF0382 family.

Its subcellular location is the cell membrane. This chain is UPF0382 membrane protein SAUSA300_0565, found in Staphylococcus aureus (strain USA300).